Reading from the N-terminus, the 1073-residue chain is Probable inorganic carbon transporter subunit DabA (1073 aa).

Zn(2+)-binding residues include Cys-551, Asp-553, His-742, and Cys-757.

Belongs to the inorganic carbon transporter (TC 9.A.2) DabA family. In terms of assembly, forms a complex with DabB. The cofactor is Zn(2+).

The protein localises to the cell inner membrane. Its function is as follows. Part of an energy-coupled inorganic carbon pump. The chain is Probable inorganic carbon transporter subunit DabA from Methylococcus capsulatus (strain ATCC 33009 / NCIMB 11132 / Bath).